A 101-amino-acid chain; its full sequence is Small ribosomal subunit protein uS14 (101 aa).

Belongs to the universal ribosomal protein uS14 family. In terms of assembly, part of the 30S ribosomal subunit. Contacts proteins S3 and S10.

Functionally, binds 16S rRNA, required for the assembly of 30S particles and may also be responsible for determining the conformation of the 16S rRNA at the A site. The chain is Small ribosomal subunit protein uS14 from Klebsiella pneumoniae (strain 342).